Here is a 212-residue protein sequence, read N- to C-terminus: ATP-dependent Clp protease proteolytic subunit (212 aa).

Ser-114 acts as the Nucleophile in catalysis. His-139 is a catalytic residue.

Belongs to the peptidase S14 family. As to quaternary structure, fourteen ClpP subunits assemble into 2 heptameric rings which stack back to back to give a disk-like structure with a central cavity, resembling the structure of eukaryotic proteasomes.

It localises to the cytoplasm. The catalysed reaction is Hydrolysis of proteins to small peptides in the presence of ATP and magnesium. alpha-casein is the usual test substrate. In the absence of ATP, only oligopeptides shorter than five residues are hydrolyzed (such as succinyl-Leu-Tyr-|-NHMec, and Leu-Tyr-Leu-|-Tyr-Trp, in which cleavage of the -Tyr-|-Leu- and -Tyr-|-Trp bonds also occurs).. Functionally, cleaves peptides in various proteins in a process that requires ATP hydrolysis. Has a chymotrypsin-like activity. Plays a major role in the degradation of misfolded proteins. The chain is ATP-dependent Clp protease proteolytic subunit from Azoarcus sp. (strain BH72).